Here is a 348-residue protein sequence, read N- to C-terminus: Heat-inducible transcription repressor HrcA (348 aa).

It belongs to the HrcA family.

Negative regulator of class I heat shock genes (grpE-dnaK-dnaJ and groELS operons). Prevents heat-shock induction of these operons. The protein is Heat-inducible transcription repressor HrcA of Thermomicrobium roseum (strain ATCC 27502 / DSM 5159 / P-2).